The following is a 207-amino-acid chain: V-type ATP synthase subunit D (207 aa).

It belongs to the V-ATPase D subunit family.

Functionally, produces ATP from ADP in the presence of a proton gradient across the membrane. The chain is V-type ATP synthase subunit D from Streptococcus gordonii (strain Challis / ATCC 35105 / BCRC 15272 / CH1 / DL1 / V288).